A 111-amino-acid polypeptide reads, in one-letter code: Large ribosomal subunit protein P2 (111 aa).

Residues 62 to 111 are disordered; that stretch reads LASVPSGGAGGAAAAGGAAAAGGAAEAAPEEAKEEEKEESDDDMGFGLFD. The segment covering 76 to 88 has biased composition (low complexity); the sequence is AGGAAAAGGAAEA. S101 is modified (phosphoserine).

It belongs to the eukaryotic ribosomal protein P1/P2 family. In terms of assembly, P1 and P2 exist as dimers at the large ribosomal subunit.

In terms of biological role, plays an important role in the elongation step of protein synthesis. The chain is Large ribosomal subunit protein P2 from Podospora anserina (Pleurage anserina).